Here is an 88-residue protein sequence, read N- to C-terminus: Small ribosomal subunit protein bS16 (88 aa).

This sequence belongs to the bacterial ribosomal protein bS16 family.

The sequence is that of Small ribosomal subunit protein bS16 from Leptospira interrogans serogroup Icterohaemorrhagiae serovar Lai (strain 56601).